We begin with the raw amino-acid sequence, 774 residues long: Lysyl oxidase homolog 2 (774 aa).

The first 25 residues, Met-1–Ala-25, serve as a signal peptide directing secretion. SRCR domains lie at Leu-58–Ser-159, Ile-188–Val-302, Val-326–Asn-425, and Leu-435–Ser-544. 9 disulfide bridges follow: Cys-84-Cys-148, Cys-97-Cys-158, Cys-128-Cys-138, Cys-218-Cys-291, Cys-231-Cys-301, Cys-265-Cys-275, Cys-351-Cys-414, Cys-364-Cys-424, and Cys-395-Cys-405. N-linked (GlcNAc...) asparagine glycosylation is present at Asn-288. An N-linked (GlcNAc...) (complex) asparagine glycan is attached at Asn-455. Cystine bridges form between Cys-464–Cys-530, Cys-477–Cys-543, and Cys-511–Cys-521. Positions Pro-548 to Ser-751 are lysyl-oxidase like. Ca(2+)-binding residues include Asp-549 and Leu-550. Disulfide bonds link Cys-573-Cys-625, Cys-579-Cys-695, Cys-657-Cys-673, and Cys-663-Cys-685. Cu cation contacts are provided by His-626, His-628, and His-630. Asn-644 carries N-linked (GlcNAc...) (complex) asparagine glycosylation. Residues Lys-653–Tyr-689 constitute a cross-link (lysine tyrosylquinone (Lys-Tyr)). Tyr-689 is subject to 2',4',5'-topaquinone. 4 residues coordinate Ca(2+): Glu-722, Asp-724, Asn-727, and Asn-728. Cysteines 732 and 746 form a disulfide.

Belongs to the lysyl oxidase family. As to quaternary structure, component of some chromatin repressor complex. Interacts with SNAI1. Interacts with TAF10. Interacts with HSPA5. Interacts with EFEMP2. Cu cation serves as cofactor. The cofactor is lysine tyrosylquinone residue. The lysine tyrosylquinone cross-link (LTQ) is generated by condensation of the epsilon-amino group of a lysine with a topaquinone produced by oxidation of tyrosine. Post-translationally, N-glycosylated. N-glycosylation on Asn-455 and Asn-644 may be essential for proper folding and secretion; may be composed of a fucosylated carbohydrates attached to a trimannose N-linked glycan core. As to expression, expressed in many tissues. Highest expression in reproductive tissues, placenta, uterus and prostate. In esophageal epithelium, expressed in the basal, prickle and granular cell layers. Up-regulated in a number of cancers cells and tissues.

It localises to the secreted. Its subcellular location is the extracellular space. The protein localises to the extracellular matrix. The protein resides in the basement membrane. It is found in the nucleus. It localises to the chromosome. Its subcellular location is the endoplasmic reticulum. It carries out the reaction L-lysyl-[protein] + O2 + H2O = (S)-2-amino-6-oxohexanoyl-[protein] + H2O2 + NH4(+). Its activity is regulated as follows. According to some reports, it is inhibited by beta-aminopropionitrile (BAPN). According to another report, it is not inhibited by beta-aminopropionitrile (BAPN). Specifically inhibited by a mouse monoclonal antibody AB0023, inhibition occurs in a non-competitive manner. Mediates the post-translational oxidative deamination of lysine residues on target proteins leading to the formation of deaminated lysine (allysine). Acts as a transcription corepressor and specifically mediates deamination of trimethylated 'Lys-4' of histone H3 (H3K4me3), a specific tag for epigenetic transcriptional activation. Shows no activity against histone H3 when it is trimethylated on 'Lys-9' (H3K9me3) or 'Lys-27' (H3K27me3) or when 'Lys-4' is monomethylated (H3K4me1) or dimethylated (H3K4me2). Also mediates deamination of methylated TAF10, a member of the transcription factor IID (TFIID) complex, which induces release of TAF10 from promoters, leading to inhibition of TFIID-dependent transcription. LOXL2-mediated deamination of TAF10 results in transcriptional repression of genes required for embryonic stem cell pluripotency including POU5F1/OCT4, NANOG, KLF4 and SOX2. Involved in epithelial to mesenchymal transition (EMT) via interaction with SNAI1 and participates in repression of E-cadherin CDH1, probably by mediating deamination of histone H3. During EMT, involved with SNAI1 in negatively regulating pericentromeric heterochromatin transcription. SNAI1 recruits LOXL2 to pericentromeric regions to oxidize histone H3 and repress transcription which leads to release of heterochromatin component CBX5/HP1A, enabling chromatin reorganization and acquisition of mesenchymal traits. Interacts with the endoplasmic reticulum protein HSPA5 which activates the IRE1-XBP1 pathway of the unfolded protein response, leading to expression of several transcription factors involved in EMT and subsequent EMT induction. Involved in E-cadherin repression following hypoxia, a hallmark of EMT believed to amplify tumor aggressiveness, suggesting that it may play a role in tumor progression. When secreted into the extracellular matrix, promotes cross-linking of extracellular matrix proteins by mediating oxidative deamination of peptidyl lysine residues in precursors to fibrous collagen and elastin. Acts as a regulator of sprouting angiogenesis, probably via collagen IV scaffolding. Acts as a regulator of chondrocyte differentiation, probably by regulating expression of factors that control chondrocyte differentiation. In Homo sapiens (Human), this protein is Lysyl oxidase homolog 2 (LOXL2).